A 137-amino-acid chain; its full sequence is 6,7-dimethyl-8-ribityllumazine synthase (137 aa).

Residues Phe-11, 43–45 (SFD), and 67–69 (CVI) contribute to the 5-amino-6-(D-ribitylamino)uracil site. 72–73 (DT) serves as a coordination point for (2S)-2-hydroxy-3-oxobutyl phosphate. The active-site Proton donor is His-75. Leu-100 provides a ligand contact to 5-amino-6-(D-ribitylamino)uracil. A (2S)-2-hydroxy-3-oxobutyl phosphate-binding site is contributed by Arg-115.

It belongs to the DMRL synthase family. In terms of assembly, forms an icosahedral capsid composed of 60 subunits, arranged as a dodecamer of pentamers.

It carries out the reaction (2S)-2-hydroxy-3-oxobutyl phosphate + 5-amino-6-(D-ribitylamino)uracil = 6,7-dimethyl-8-(1-D-ribityl)lumazine + phosphate + 2 H2O + H(+). The protein operates within cofactor biosynthesis; riboflavin biosynthesis; riboflavin from 2-hydroxy-3-oxobutyl phosphate and 5-amino-6-(D-ribitylamino)uracil: step 1/2. Catalyzes the formation of 6,7-dimethyl-8-ribityllumazine by condensation of 5-amino-6-(D-ribitylamino)uracil with 3,4-dihydroxy-2-butanone 4-phosphate. This is the penultimate step in the biosynthesis of riboflavin. The chain is 6,7-dimethyl-8-ribityllumazine synthase from Methanococcus maripaludis (strain C6 / ATCC BAA-1332).